A 390-amino-acid polypeptide reads, in one-letter code: Protein phosphatase 1B (390 aa).

Residues 1–14 (MGAFLDKPKTEKHN) show a composition bias toward basic and acidic residues. The interval 1–20 (MGAFLDKPKTEKHNAHGAGN) is disordered. The N-myristoyl glycine moiety is linked to residue G2. K12 participates in a covalent cross-link: Glycyl lysine isopeptide (Lys-Gly) (interchain with G-Cter in ISG15). The 273-residue stretch at 23–295 (RYGLSSMQGW…DNMSVVLVCF (273 aa)) folds into the PPM-type phosphatase domain. The Mn(2+) site is built by D60, G61, D243, and D286. The segment at 371–390 (NPHKDNDGGAGDLEDSLVAL) is disordered. S386 bears the Phosphoserine mark.

Belongs to the PP2C family. As to quaternary structure, monomer. Interacts with PAK6. Interacts with the phosphorylated form of IKBKB/IKKB. The cofactor is Mg(2+). Requires Mn(2+) as cofactor. In terms of processing, isgylation negatively regulates its activity. Post-translationally, N-myristoylation is essential for the recognition of its substrates for dephosphorylation. In terms of tissue distribution, isoform 1: Expressed ubiquitously. Isoform 2: Expressed exclusively in testis and intestine. Isoform 3: Expressed exclusively in brain and intestine. Isoform 4: Expressed exclusively in testis and intestine.

The protein localises to the cytoplasm. It is found in the cytosol. Its subcellular location is the membrane. The catalysed reaction is O-phospho-L-seryl-[protein] + H2O = L-seryl-[protein] + phosphate. It carries out the reaction O-phospho-L-threonyl-[protein] + H2O = L-threonyl-[protein] + phosphate. Its function is as follows. Enzyme with a broad specificity. Dephosphorylates PRKAA1 and PRKAA2. Inhibits TBK1-mediated antiviral signaling by dephosphorylating it at 'Ser-172'. Plays an important role in the termination of TNF-alpha-mediated NF-kappa-B activation through dephosphorylating and inactivating IKBKB/IKKB. The polypeptide is Protein phosphatase 1B (Ppm1b) (Mus musculus (Mouse)).